The primary structure comprises 149 residues: UPF0178 protein VC0395_A0405/VC395_0897 (149 aa).

This sequence belongs to the UPF0178 family.

In Vibrio cholerae serotype O1 (strain ATCC 39541 / Classical Ogawa 395 / O395), this protein is UPF0178 protein VC0395_A0405/VC395_0897.